The chain runs to 211 residues: Probable superoxide dismutase [Mn], mitochondrial (211 aa).

Residues H36, H84, D173, and H177 each contribute to the Mn(2+) site.

This sequence belongs to the iron/manganese superoxide dismutase family. Homotetramer. Requires Mn(2+) as cofactor.

The protein localises to the mitochondrion matrix. It carries out the reaction 2 superoxide + 2 H(+) = H2O2 + O2. In terms of biological role, destroys superoxide anion radicals which are normally produced within the cells and which are toxic to biological systems. In Debaryomyces hansenii (strain ATCC 36239 / CBS 767 / BCRC 21394 / JCM 1990 / NBRC 0083 / IGC 2968) (Yeast), this protein is Probable superoxide dismutase [Mn], mitochondrial.